The sequence spans 295 residues: Iron-sulfur cluster carrier protein (295 aa).

38 to 45 serves as a coordination point for ATP; it reads GKGGVGKS.

Belongs to the Mrp/NBP35 ATP-binding proteins family. As to quaternary structure, homodimer.

Binds and transfers iron-sulfur (Fe-S) clusters to target apoproteins. Can hydrolyze ATP. This chain is Iron-sulfur cluster carrier protein, found in Pyrococcus abyssi (strain GE5 / Orsay).